Reading from the N-terminus, the 462-residue chain is Ketoisovalerate reductase (462 aa).

A disordered region spans residues 34-55 (PTAVKPDRADRGDFDPGKYPVD). Over residues 38–49 (KPDRADRGDFDP) the composition is skewed to basic and acidic residues. NADP(+) is bound at residue 72–77 (GPGNVG). The short motif at 167-184 (ADRLRRYLGRCSSVVFAQ) is the Calmoduling-binding element. K290 acts as the Proton donor in catalysis. Residues N294, N298, and S403 each coordinate substrate. Position 415 (E415) interacts with NADP(+).

Belongs to the ketopantoate reductase family. Homodimer. Binds to calmodulin in a calcium-independent manner.

It carries out the reaction (R)-2-hydroxy-3-methylbutanoate + NADP(+) = 3-methyl-2-oxobutanoate + NADPH + H(+). Its activity is regulated as follows. Environmental stimuli such as light and salt stress suppress activity through stimulation of calmodulin (CaM) that binds BEA2 and probably impairs its dimerization. Its function is as follows. Ketoisovalerate reductase; part of the gene cluster that mediates the biosynthesis of beauvericin (BEA), a non-ribosomal cyclic hexadepsipeptide that shows antibiotic, antifungal, insecticidal, and cancer cell antiproliferative and antihaptotactic activity. Ketoisovalerate reductase BEA2 catalyzes the NADPH-specific reduction of ketoisovaleric acid to hydroxyisovalerate, a precursor for beauvericin biosynthesis. The nonribosomal cyclodepsipeptide synthetase BEA1 then catalyzes the formation of beauvericin via condensation and cyclization of 3 dipeptidol monomers, each composed of one unit of hydroxyisovalerate and one unit of N-methyl-phenylalanine. The protein is Ketoisovalerate reductase of Beauveria bassiana (White muscardine disease fungus).